A 99-amino-acid polypeptide reads, in one-letter code: MLADKVKLSAKDILEKEFKTGVRGYRQEDVDKFLDMIIKDYETFHQEIEELQQENLQLKKQLEEASKKQPVQSNTTNFDILKRLSNLEKHVFGSKLYDE.

Positions 34 to 71 (LDMIIKDYETFHQEIEELQQENLQLKKQLEEASKKQPV) form a coiled coil.

The protein belongs to the GpsB family. As to quaternary structure, forms polymers through the coiled coil domains. Interacts with PBP1, MreC and EzrA.

The protein localises to the cytoplasm. Functionally, divisome component that associates with the complex late in its assembly, after the Z-ring is formed, and is dependent on DivIC and PBP2B for its recruitment to the divisome. Together with EzrA, is a key component of the system that regulates PBP1 localization during cell cycle progression. Its main role could be the removal of PBP1 from the cell pole after pole maturation is completed. Also contributes to the recruitment of PBP1 to the division complex. Not essential for septum formation. The chain is Cell cycle protein GpsB from Bacillus velezensis (strain DSM 23117 / BGSC 10A6 / LMG 26770 / FZB42) (Bacillus amyloliquefaciens subsp. plantarum).